The following is a 391-amino-acid chain: Chorismate synthase (391 aa).

Arg48 is an NADP(+) binding site. Residues 126-128, Gly286, 301-305, and Arg328 contribute to the FMN site; these read RAS and KPTSS.

The protein belongs to the chorismate synthase family. It depends on FMNH2 as a cofactor.

The enzyme catalyses 5-O-(1-carboxyvinyl)-3-phosphoshikimate = chorismate + phosphate. The protein operates within metabolic intermediate biosynthesis; chorismate biosynthesis; chorismate from D-erythrose 4-phosphate and phosphoenolpyruvate: step 7/7. In terms of biological role, catalyzes the anti-1,4-elimination of the C-3 phosphate and the C-6 proR hydrogen from 5-enolpyruvylshikimate-3-phosphate (EPSP) to yield chorismate, which is the branch point compound that serves as the starting substrate for the three terminal pathways of aromatic amino acid biosynthesis. This reaction introduces a second double bond into the aromatic ring system. This is Chorismate synthase from Saccharolobus islandicus (strain Y.N.15.51 / Yellowstone #2) (Sulfolobus islandicus).